The primary structure comprises 283 residues: ATP phosphoribosyltransferase (283 aa).

It belongs to the ATP phosphoribosyltransferase family. Long subfamily. Mg(2+) is required as a cofactor.

Its subcellular location is the cytoplasm. It carries out the reaction 1-(5-phospho-beta-D-ribosyl)-ATP + diphosphate = 5-phospho-alpha-D-ribose 1-diphosphate + ATP. The protein operates within amino-acid biosynthesis; L-histidine biosynthesis; L-histidine from 5-phospho-alpha-D-ribose 1-diphosphate: step 1/9. With respect to regulation, feedback inhibited by histidine. Catalyzes the condensation of ATP and 5-phosphoribose 1-diphosphate to form N'-(5'-phosphoribosyl)-ATP (PR-ATP). Has a crucial role in the pathway because the rate of histidine biosynthesis seems to be controlled primarily by regulation of HisG enzymatic activity. The chain is ATP phosphoribosyltransferase from Nocardia farcinica (strain IFM 10152).